Here is a 1433-residue protein sequence, read N- to C-terminus: MAEVMESVSTAVVPNSSVDWQKRCIALETQLMRFRLQAGNIRHLLAERMQELEQRVIEADQRAESAEKQVHIMEEKLKSANMQPSETENSLYRSYQELSNQIQEKDLIVKRLEGQLEKQNLVRAQEAEIIEEKAAKIKDWVTFKLREMETENQQLKKANLKQTEQILMLQDKLQTLLERPMSPAVDTHLVPSSPLHPPSCPGTPPAQEDCWRLPGCRLNSSADSKRKITEGCDSAFHSASLLPMLQDKADSPKSSQDGVDATSTVKESAEGVEPSFGVMRDRAMGGASDRDHSSDELNSKFRSQCLRSSSSSSSSSSSAYETPGPGGFDTPTPTPKSPPPVSLSPPLTRLPLSCPFPLALPLGTSMTLPKVRTPLTPRDSIQLVKKHHSQPQPGLERLHQVNVSIDIGNCGSPSCHSLVPGSAPSHGLEETDIDEGTPESMEVVVEGSEITEAQPNDGDLLDGLTKELEMMDPEALKPPTPPLHRFPSWESRIYAVAKLGMRVSEACLGAKTIGRVSTQPQHSTTGPFTHLIYKNISVPVYSTLKGKATQISSVPLPDDDSGSEDDSSSLASLHTSTLGPDKKGSTPGSPRAVKRGVSTSSISSESDYAIPPDAYSLDSDCSEPEHKVQRTSSYSCESVGPETLEKTGYLLKMGSQVKAWKRRWFILRNGEILYYKSPSDVIRKPQGQMELNSSCHIARGEGAQTFQLITEKKTFYLAADSPNILEDWIRVLQNVLKVQASGPISMDKEVKPTARGWLTKVKHGHSKLVWCALIGKVFYYYRNQEDKFPLGQLRVREARVEEVDRSCDSDEDYEAGGRGFLSSHFTLVVHPKEQSPTYLLVGTKQEKDTWLYHLTVAAGSSASLRVGTEFEQLIGKLLDVDGVSDSALWKREVLCFSKEGLRYPLTTLPSEALQTEAIKLFKSCQLFINVLVESPSIDYHTSLAQNALQVCLTHPELQNEMYCQLIKQTNCRTPHNYALTQCWQLLSLCVALFLPQHHFLWYLRQYLQRNADPRTEVGKYAVYCQRSVERTLQNGEREAKPSRMEILSILLRNPYHHSLPFSIPVHFMNNTYEVVGFDGSTTVEEFLNTVNQRTGMRKPQISGFALFTDDPSGKDLEHCLQPANKICDVISKWEQALKELHPGKYEGTRTVRLTYKSRLCFRAQAKGETERERLLLAYQVNDEVLQGHFPVSKELALEVAALMAQVEYGDLDRAAMSPVGSPQPKTQQTLLQVLERFYPKRYKQECSVEQLRELGERLVATKWSVLRGCTASECVRIYLTVARKWPLFGAKLFNAKPLPPSSLDRTQVWLAVNEDGLSVLDYTMYPLVTYPYQSVITFGGCKEDFMLVVSLIKDQALGKKTVDKLLFAMAKPKILELTLLIASYINYWTSSLPGASNQTQSSTLGAQGDKKLWDIDSRHFPSMTYTTKGPTLL.

The stretch at 40–174 forms a coiled coil; it reads NIRHLLAERM…QILMLQDKLQ (135 aa). 2 disordered regions span residues 247-346 and 552-634; these read DKAD…LSPP and SSVP…TSSY. Residues 252 to 266 show a composition bias toward polar residues; it reads PKSSQDGVDATSTVK. Residues 279 to 299 show a composition bias toward basic and acidic residues; sequence MRDRAMGGASDRDHSSDELNS. A compositionally biased stretch (low complexity) spans 308-318; that stretch reads SSSSSSSSSSS. Residues 332–343 show a composition bias toward pro residues; sequence TPTPKSPPPVSL. Residues 557–567 show a composition bias toward acidic residues; the sequence is PDDDSGSEDDS. Positions 568-578 are enriched in low complexity; that stretch reads SSLASLHTSTL. Polar residues predominate over residues 597–606; the sequence is VSTSSISSES. PH domains lie at 643–737 and 751–859; these read TLEK…NVLK and KPTA…VAAG. Residues 896–1050 form the MyTH4 domain; that stretch reads FSKEGLRYPL…PSRMEILSIL (155 aa). The FERM domain occupies 1061–1392; it reads FSIPVHFMNN…SYINYWTSSL (332 aa).

Critical component of the guidance pathway underlying endothelial cell migration and blood vessel patterning. Involved in mediating membrane localization of ephrin proteins, which have been shown to provide guidance cues for endothelial cell migration. The chain is Pleckstrin homology domain-containing family H member 1 (plekhh1) from Danio rerio (Zebrafish).